The following is a 282-amino-acid chain: Parvulin-like PPIase (282 aa).

A signal peptide spans 1–20 (MKKLSVIFLSVSMLSGIAFA). A PpiC domain is found at 138 to 231 (KEQIKVAHIL…FGWHIIKVLE (94 aa)).

It belongs to the PpiC/parvulin rotamase family.

The protein localises to the cell outer membrane. It catalyses the reaction [protein]-peptidylproline (omega=180) = [protein]-peptidylproline (omega=0). This is Parvulin-like PPIase (plp) from Rickettsia felis (strain ATCC VR-1525 / URRWXCal2) (Rickettsia azadi).